Consider the following 186-residue polypeptide: Elongation factor P (186 aa).

It belongs to the elongation factor P family.

Its subcellular location is the cytoplasm. It participates in protein biosynthesis; polypeptide chain elongation. In terms of biological role, involved in peptide bond synthesis. Stimulates efficient translation and peptide-bond synthesis on native or reconstituted 70S ribosomes in vitro. Probably functions indirectly by altering the affinity of the ribosome for aminoacyl-tRNA, thus increasing their reactivity as acceptors for peptidyl transferase. The chain is Elongation factor P from Beutenbergia cavernae (strain ATCC BAA-8 / DSM 12333 / CCUG 43141 / JCM 11478 / NBRC 16432 / NCIMB 13614 / HKI 0122).